The chain runs to 346 residues: Phenylalanine--tRNA ligase alpha subunit (346 aa).

Residue glutamate 260 participates in Mg(2+) binding.

This sequence belongs to the class-II aminoacyl-tRNA synthetase family. Phe-tRNA synthetase alpha subunit type 1 subfamily. In terms of assembly, tetramer of two alpha and two beta subunits. Mg(2+) serves as cofactor.

It localises to the cytoplasm. It catalyses the reaction tRNA(Phe) + L-phenylalanine + ATP = L-phenylalanyl-tRNA(Phe) + AMP + diphosphate + H(+). The polypeptide is Phenylalanine--tRNA ligase alpha subunit (Herpetosiphon aurantiacus (strain ATCC 23779 / DSM 785 / 114-95)).